The following is a 40-amino-acid chain: Putative protein FAM86JP (40 aa).

A disordered region spans residues 1-40; sequence MPGAFSQNSSKRRAVLPRSHRVAGRGPAEAGCLPGAPAGS. A compositionally biased stretch (basic residues) spans 10 to 23; the sequence is SKRRAVLPRSHRVA.

This Homo sapiens (Human) protein is Putative protein FAM86JP.